The following is a 246-amino-acid chain: MKKTKRIFTALSHLFSPKWWKKNWQRVVFCFFFAVFALLLIFRFVPIPFSAYMVQQKIANLLQGDFRYQIQYNWVSLENISPNIQLAVISSEDQRFLEHLGFDFEAIQRAIRYNEKSNKGIRGASTISQQTAKNLMLWHGQNWLRKGLEVPATMLLELTWSKKRILEVYLNIAEFGNGIFGVEAASRYYFKKSAKNLSQNEAALLAAVLPNPIIYKVNKPSLLVRKKQTWILRQMGNLGTEYLSHL.

The helical transmembrane segment at 27-47 threads the bilayer; that stretch reads VVFCFFFAVFALLLIFRFVPI.

Belongs to the glycosyltransferase 51 family.

The protein resides in the cell inner membrane. The catalysed reaction is [GlcNAc-(1-&gt;4)-Mur2Ac(oyl-L-Ala-gamma-D-Glu-L-Lys-D-Ala-D-Ala)](n)-di-trans,octa-cis-undecaprenyl diphosphate + beta-D-GlcNAc-(1-&gt;4)-Mur2Ac(oyl-L-Ala-gamma-D-Glu-L-Lys-D-Ala-D-Ala)-di-trans,octa-cis-undecaprenyl diphosphate = [GlcNAc-(1-&gt;4)-Mur2Ac(oyl-L-Ala-gamma-D-Glu-L-Lys-D-Ala-D-Ala)](n+1)-di-trans,octa-cis-undecaprenyl diphosphate + di-trans,octa-cis-undecaprenyl diphosphate + H(+). It participates in cell wall biogenesis; peptidoglycan biosynthesis. Its function is as follows. Peptidoglycan polymerase that catalyzes glycan chain elongation from lipid-linked precursors. In Haemophilus influenzae (strain ATCC 51907 / DSM 11121 / KW20 / Rd), this protein is Biosynthetic peptidoglycan transglycosylase.